Reading from the N-terminus, the 380-residue chain is Cytochrome b (380 aa).

A run of 4 helical transmembrane segments spans residues 34–54 (FGSL…FLAM), 78–99 (WLLR…YMHI), 114–134 (WNIG…GYVL), and 179–199 (FFAF…VHLL). Residues His-84 and His-98 each coordinate heme b. 2 residues coordinate heme b: His-183 and His-197. His-202 lines the a ubiquinone pocket. 4 consecutive transmembrane segments (helical) span residues 227–247 (YKDV…ALFS), 289–309 (LGGV…PFVH), 321–341 (LAQV…WLGG), and 348–368 (YIFL…LFIP).

It belongs to the cytochrome b family. As to quaternary structure, the cytochrome bc1 complex contains 3 respiratory subunits (MT-CYB, CYC1 and UQCRFS1), 2 core proteins (UQCRC1 and UQCRC2) and probably 6 low-molecular weight proteins. Heme b serves as cofactor.

The protein resides in the mitochondrion inner membrane. Its function is as follows. Component of the ubiquinol-cytochrome c reductase complex (complex III or cytochrome b-c1 complex) that is part of the mitochondrial respiratory chain. The b-c1 complex mediates electron transfer from ubiquinol to cytochrome c. Contributes to the generation of a proton gradient across the mitochondrial membrane that is then used for ATP synthesis. The chain is Cytochrome b (MT-CYB) from Branchiostoma lanceolatum (Common lancelet).